The following is a 617-amino-acid chain: Serine/threonine-protein kinase par-4 (617 aa).

Residues 1-11 show a composition bias toward polar residues; the sequence is MDAPSTSSGAQ. A disordered region spans residues 1 to 59; it reads MDAPSTSSGAQSKLLMPGDDEADEDHQNRGDPNLQQKQKIQLNVDPDYDDDEDDDCFID. The span at 46–57 shows a compositional bias: acidic residues; the sequence is PDYDDDEDDDCF. The Protein kinase domain occupies 183–446; the sequence is YMWGGQIGTG…CLETMIHPWF (264 aa). ATP is bound by residues 189-197 and Lys-212; that span reads IGTGSYGKV. The Proton acceptor role is filled by Asp-310. The disordered stretch occupies residues 523–617; it reads LEAKPGDGPD…CIFRSRTDSA (95 aa). The span at 587-597 shows a compositional bias: pro residues; sequence DPPPTAAPGAP.

Belongs to the protein kinase superfamily. CAMK Ser/Thr protein kinase family. LKB1 subfamily. As to quaternary structure, interacts with strd-1. The cofactor is Mg(2+). Mn(2+) is required as a cofactor. In terms of tissue distribution, expressed in the gonads, oocytes and early embryos (at protein level).

It localises to the cytoplasm. It is found in the cell cortex. It carries out the reaction L-seryl-[protein] + ATP = O-phospho-L-seryl-[protein] + ADP + H(+). The enzyme catalyses L-threonyl-[protein] + ATP = O-phospho-L-threonyl-[protein] + ADP + H(+). Functionally, required for cytoplasmic partitioning and asymmetric cell division in early embryogenesis. Controls the asymmetric cell division of the Q.p neuroblast lineage. Involved in mediating cell polarization via regulation of anillin family scaffold proteins. Phosphorylates and restricts the asymmetry effectors mex-5 and mex-6 to the anterior cytoplasm of the zygote and maintains these phosphorylations until fertilization. May phosphorylate par-1. Required for strd-1 localization to the cell cortex of early embryos and may be required for strd-1 protein stabilization. May regulate the integrity of the early embryonic cortex in a strd-1-dependent manner. Phosphorylates and regulates aak-2 in response to oxidative stress and during dauer development. May also play a role in motility, behavioral response, regulation of lifespan and dauer formation through this pathway. Required to establish germline stem cell (GSC) quiescence during dauer development. Acts downstream of unc-40 in dendrite outgrowth. May play a role in cell shedding during embryogenesis, probably by phosphorylating pig-1. The protein is Serine/threonine-protein kinase par-4 (par-4) of Caenorhabditis elegans.